The chain runs to 24 residues: Homotarsinin (24 aa).

An Arginine amide modification is found at R24.

In terms of assembly, homodimer; disulfide-linked. As to expression, expressed by the skin glands.

It is found in the secreted. Functionally, antimicrobial peptide. Active against Gram-negative bacteria E.coli ATCC 25922 (MIC=1.5 uM) and P.aeruginosa ATTC 27853 (MIC=23.2 uM) and against Gram-positive bacterium S.aureus ATCC 29313 (MIC=11.6 uM). Has no hemolytic activity. Associates with and disrupts membranes in vitro. The protein is Homotarsinin of Phyllomedusa tarsius (Brownbelly leaf frog).